The chain runs to 817 residues: Rho GTPase-activating protein gacII (817 aa).

One can recognise a Rho-GAP domain in the interval 20–204; sequence TTIVKIGTPK…TLIEEFQYIS (185 aa). The 61-residue stretch at 238–298 folds into the SH3 domain; the sequence is EDYLIAKANT…SQTYVDIIDI (61 aa). Positions 318–339 are enriched in low complexity; that stretch reads ASTILHTPPTSSSSSSSSSSSS. Disordered stretches follow at residues 318–638, 691–771, and 783–817; these read ASTI…NIPV, LGGQ…QQQQ, and LPPQNTNLSGKNLQRSSTSMLLNKLPPPPFSFNKN. The segment covering 340–358 has biased composition (polar residues); sequence ILLTDNQPKLCSSTPRINN. Over residues 359–391 the composition is skewed to low complexity; that stretch reads SPSSFSPSLSSTTPQLLVQQSPRQSPRQIPSIS. The segment covering 396 to 438 has biased composition (polar residues); the sequence is PNNTNQPSFGHGTLQRTSTGYFSSKPLSISQPINMSKPTNMSP. The span at 461-471 shows a compositional bias: pro residues; that stretch reads PPLPTKPPPLT. The span at 472-498 shows a compositional bias: low complexity; that stretch reads IPSSSSLPTTPIKQQPQQPIQQPLTPQ. Over residues 509–532 the composition is skewed to polar residues; it reads LSSSVNTANTGNCANILSPNSDRY. Composition is skewed to low complexity over residues 534-568, 577-587, and 607-624; these read SSRSQSSVHLSGSSSSSSSSSSSSSSSSSSSSSTS, KSKSSKNSPSK, and ITTTTTTTTTTTTTTIAT. The segment covering 625–635 has biased composition (pro residues); it reads TPPPPSKPLPN. Polar residues predominate over residues 705–722; the sequence is KSQSSYLDNNNLPSRNTN. Positions 725–734 are enriched in pro residues; sequence NLPPRPPPLN. Low complexity-rich tracts occupy residues 735–744 and 752–771; these read IPQQQQQYKP and QSPQSSLNQSLQIPLQQQQQ. A compositionally biased stretch (polar residues) spans 785-803; the sequence is PQNTNLSGKNLQRSSTSML. Positions 807–817 are enriched in pro residues; sequence LPPPPFSFNKN.

Its subcellular location is the cytoplasm. In terms of biological role, rho GTPase-activating protein involved in the signal transduction pathway. In Dictyostelium discoideum (Social amoeba), this protein is Rho GTPase-activating protein gacII (gacII).